Reading from the N-terminus, the 87-residue chain is Small ribosomal subunit protein bS20 (87 aa).

The segment at 1-22 (MANSAGSKKRARQAVKSRAHNG) is disordered. Basic residues predominate over residues 7-19 (SKKRARQAVKSRA).

It belongs to the bacterial ribosomal protein bS20 family.

Its function is as follows. Binds directly to 16S ribosomal RNA. This is Small ribosomal subunit protein bS20 from Marinomonas sp. (strain MWYL1).